We begin with the raw amino-acid sequence, 242 residues long: Ubiquinone biosynthesis O-methyltransferase (242 aa).

S-adenosyl-L-methionine contacts are provided by R44, G64, D85, and M129.

Belongs to the methyltransferase superfamily. UbiG/COQ3 family.

The enzyme catalyses a 3-demethylubiquinol + S-adenosyl-L-methionine = a ubiquinol + S-adenosyl-L-homocysteine + H(+). It carries out the reaction a 3-(all-trans-polyprenyl)benzene-1,2-diol + S-adenosyl-L-methionine = a 2-methoxy-6-(all-trans-polyprenyl)phenol + S-adenosyl-L-homocysteine + H(+). The protein operates within cofactor biosynthesis; ubiquinone biosynthesis. Functionally, O-methyltransferase that catalyzes the 2 O-methylation steps in the ubiquinone biosynthetic pathway. This is Ubiquinone biosynthesis O-methyltransferase from Klebsiella pneumoniae subsp. pneumoniae (strain ATCC 700721 / MGH 78578).